The following is a 279-amino-acid chain: MIQTFNELGALRGQIAEWKREGLRVALVPTMGNLHGGHHSLVTLARQYADKVVASIFVNPTQFGPNEDFSRYPRTPEADVAGLEQAGCDAVWLPSVEAMYPLGVDKTTRMHAPGVSEVLEGASRPGHFDGVCTVVARLFLQVQPDAAVFGRKDYQQLAVIKQMVAELSFPIQIVGADIVRDDDGLAKSSRNQYLSAEQRPVATSIHRTLLGMREGYVAGQSRAQIEADATAALQADGFQVDYAVLRTPELAEPTFDGGGRVALIAARLGTTRLIDNLEF.

31–38 (MGNLHGGH) is a binding site for ATP. The active-site Proton donor is the His38. Gln62 provides a ligand contact to (R)-pantoate. Beta-alanine is bound at residue Gln62. 150 to 153 (GRKD) provides a ligand contact to ATP. Gln156 serves as a coordination point for (R)-pantoate. ATP is bound by residues Val179 and 187–190 (KSSR).

The protein belongs to the pantothenate synthetase family. Homodimer.

It localises to the cytoplasm. The catalysed reaction is (R)-pantoate + beta-alanine + ATP = (R)-pantothenate + AMP + diphosphate + H(+). The protein operates within cofactor biosynthesis; (R)-pantothenate biosynthesis; (R)-pantothenate from (R)-pantoate and beta-alanine: step 1/1. Its function is as follows. Catalyzes the condensation of pantoate with beta-alanine in an ATP-dependent reaction via a pantoyl-adenylate intermediate. The chain is Pantothenate synthetase from Stenotrophomonas maltophilia (strain R551-3).